The primary structure comprises 546 residues: Crossover junction endonuclease EME1A (546 aa).

Disordered regions lie at residues 1–55 and 88–232; these read MSDF…FLDE and VISL…REKQ. Positions 28 to 49 are enriched in polar residues; it reads PTDLNLDTEPSLQKQPPGSAST. Composition is skewed to basic and acidic residues over residues 103–120 and 149–167; these read SSKKYEPVYTDSWKKPCR and DAIEVDSDHEKEDTGVEKM. A compositionally biased stretch (polar residues) spans 173–183; it reads TITSKSTSLSA. A coiled-coil region spans residues 188–245; that stretch reads KKKMSKDEKTRAAEEKKLQKEQEKLQKAASKAEDAEHKKLEREKQKWAKEKDKALKCI. The segment covering 192 to 232 has biased composition (basic and acidic residues); sequence SKDEKTRAAEEKKLQKEQEKLQKAASKAEDAEHKKLEREKQ. Residues 278–478 enclose the ERCC4 domain; it reads NPIQRSIVWT…PSLKSLLKVY (201 aa).

The protein belongs to the EME1/MMS4 family. In terms of assembly, forms a heterodimer with MUS81. It depends on Mg(2+) as a cofactor. The cofactor is Ca(2+).

The protein resides in the nucleus. Functionally, interacts with MUS81 to form a DNA structure-specific endonuclease with substrate preference for branched DNA structures with a 5'-end at the branch nick. Typical substrates include 3'-flap structures, D-loops, replication forks, nicked Holliday junctions and also intact Holliday junctions with a reduced efficiency. May be required in mitosis for the processing of stalled or collapsed replication fork intermediates. Plays a role in DNA repair and in genotoxic stress-induced homologous recombination (HR) in somatic cells. Mediates a subset of meiotic recombination events that are insensitive to crossover interference. This is Crossover junction endonuclease EME1A (EME1A) from Arabidopsis thaliana (Mouse-ear cress).